Here is a 279-residue protein sequence, read N- to C-terminus: Gas vesicle protein L2 (279 aa).

Belongs to the gas vesicle GvpF/GvpL family. GvpF to GvpM interact with each other in vitro, and may form multi-subunit complex(es). Interacts with GvpC, GvpN and GvpO.

Its subcellular location is the gas vesicle. In terms of biological role, proteins GvpF to GvpM might be involved in nucleating gas vesicle formation. A minor component of the gas vesicle. Gas vesicles are hollow, gas filled proteinaceous nanostructures found in several microbial planktonic microorganisms. They allow positioning of halobacteria at the optimal depth for growth in the poorly aerated, shallow brine pools of their habitat. Its function is as follows. Expression of 2 c-vac DNA fragments containing 2 divergently transcribed regions (gvpE-gvpF-gvpG-gvpH-gvpI-gvpJ-gvpK-gvpL-gvpM and gvpA-gvpC-gvpN-gvpO) allows H.volcanii to produce gas vesicles. The chain is Gas vesicle protein L2 from Halobacterium salinarum (strain ATCC 700922 / JCM 11081 / NRC-1) (Halobacterium halobium).